Consider the following 173-residue polypeptide: NADH-ubiquinone oxidoreductase chain 6 (173 aa).

The next 5 helical transmembrane spans lie at 1–21 (MVYFVSMMMIGLILGLMGVAS), 28–48 (AALGLVTAAGVGCGLLVSYGG), 53–73 (LILFLIYLGGMLVVFAYTAAL), 87–107 (VLMYVGIYLTGLVIAGKYFLV), and 139–159 (LGGWMLVLSGWVLLVTLFVVL).

Belongs to the complex I subunit 6 family.

It is found in the mitochondrion membrane. It catalyses the reaction a ubiquinone + NADH + 5 H(+)(in) = a ubiquinol + NAD(+) + 4 H(+)(out). Functionally, core subunit of the mitochondrial membrane respiratory chain NADH dehydrogenase (Complex I) that is believed to belong to the minimal assembly required for catalysis. Complex I functions in the transfer of electrons from NADH to the respiratory chain. The immediate electron acceptor for the enzyme is believed to be ubiquinone. In Scyliorhinus canicula (Small-spotted catshark), this protein is NADH-ubiquinone oxidoreductase chain 6 (MT-ND6).